The following is a 431-amino-acid chain: Histidinol dehydrogenase (431 aa).

NAD(+) is bound by residues Tyr127, Gln185, and Asn208. Substrate contacts are provided by Ser234, Gln256, and His259. Zn(2+) contacts are provided by Gln256 and His259. Active-site proton acceptor residues include Glu323 and His324. His324, Asp357, Glu411, and His416 together coordinate substrate. Asp357 provides a ligand contact to Zn(2+). His416 provides a ligand contact to Zn(2+).

This sequence belongs to the histidinol dehydrogenase family. Requires Zn(2+) as cofactor.

The enzyme catalyses L-histidinol + 2 NAD(+) + H2O = L-histidine + 2 NADH + 3 H(+). The protein operates within amino-acid biosynthesis; L-histidine biosynthesis; L-histidine from 5-phospho-alpha-D-ribose 1-diphosphate: step 9/9. Catalyzes the sequential NAD-dependent oxidations of L-histidinol to L-histidinaldehyde and then to L-histidine. This is Histidinol dehydrogenase from Vibrio vulnificus (strain YJ016).